The primary structure comprises 372 residues: Glutamate 5-kinase (372 aa).

Residue Lys-14 coordinates ATP. Substrate-binding residues include Ser-54, Asp-141, and Asn-153. 173–174 contacts ATP; the sequence is TD. A PUA domain is found at 280–358; it reads RGHVVIDAGA…GEIEIVLGYM (79 aa).

The protein belongs to the glutamate 5-kinase family.

The protein localises to the cytoplasm. The catalysed reaction is L-glutamate + ATP = L-glutamyl 5-phosphate + ADP. It functions in the pathway amino-acid biosynthesis; L-proline biosynthesis; L-glutamate 5-semialdehyde from L-glutamate: step 1/2. Catalyzes the transfer of a phosphate group to glutamate to form L-glutamate 5-phosphate. This chain is Glutamate 5-kinase, found in Burkholderia orbicola (strain MC0-3).